A 1482-amino-acid polypeptide reads, in one-letter code: Chromosome partition protein MukB (1482 aa).

34 to 41 (GGNGAGKS) lines the ATP pocket. 6 coiled-coil regions span residues 337–418 (LNLV…QYQQ), 444–472 (LDTY…QTAH), 509–601 (RHLA…TSHA), 781–805 (AARE…ATLS), 835–1116 (EAEI…AKAG), and 1210–1265 (EAIE…LQSV). Positions 666 to 783 (PGGAEDARLN…SVPLFGRAAR (118 aa)) are flexible hinge. Positions 1049–1077 (ADAGAEERARQRRDELHTRLSNNRSRRNQ) are disordered. A compositionally biased stretch (basic and acidic residues) spans 1051–1066 (AGAEERARQRRDELHT).

The protein belongs to the SMC family. MukB subfamily. Homodimerization via its hinge domain. Binds to DNA via its C-terminal region. Interacts, and probably forms a ternary complex, with MukE and MukF via its C-terminal region. The complex formation is stimulated by calcium or magnesium. Interacts with tubulin-related protein FtsZ.

It localises to the cytoplasm. Its subcellular location is the nucleoid. Plays a central role in chromosome condensation, segregation and cell cycle progression. Functions as a homodimer, which is essential for chromosome partition. Involved in negative DNA supercoiling in vivo, and by this means organize and compact chromosomes. May achieve or facilitate chromosome segregation by condensation DNA from both sides of a centrally located replisome during cell division. The polypeptide is Chromosome partition protein MukB (Cronobacter sakazakii (strain ATCC BAA-894) (Enterobacter sakazakii)).